Reading from the N-terminus, the 346-residue chain is MDIKAAIAKVVDRKDLTTEEMIEVMQQIMTGQATPAQIGGFLVALRFKSESVGEITGAAQVMRQLASKVDIDDPHLVDTCGTGGDGSNLFNVSTAAAFVVAAAGGKVAKHGNRSVSSRSGSADVLEAAGINLDMTAEQVARAIKEIGVGFLFAPAHHSAMKHAIGPRREMGIRTIFNMLGPLTNPAGVTKQVIGVFNPLLCLPLAEVLQRLGSTHVLVVSAADGLDEISLACETHVAELKDGKISEYTLTPEDAGIMRRSLDGLTVASAEESLTLIEAALTKVTDQTSQKARDIVALNAGAAIYAADLASSFKEGVEMAQDAIGSGLAFAKLKELASFSACFKEEE.

5-phospho-alpha-D-ribose 1-diphosphate contacts are provided by residues glycine 81, 84-85 (GD), 91-94 (NVST), 109-117 (KHGNRSVSS), and serine 121. Anthranilate is bound at residue glycine 81. Serine 93 is a binding site for Mg(2+). Residue asparagine 112 participates in anthranilate binding. Arginine 167 contributes to the anthranilate binding site. The Mg(2+) site is built by aspartate 226 and glutamate 227.

This sequence belongs to the anthranilate phosphoribosyltransferase family. As to quaternary structure, homodimer. Mg(2+) serves as cofactor.

It catalyses the reaction N-(5-phospho-beta-D-ribosyl)anthranilate + diphosphate = 5-phospho-alpha-D-ribose 1-diphosphate + anthranilate. The protein operates within amino-acid biosynthesis; L-tryptophan biosynthesis; L-tryptophan from chorismate: step 2/5. Functionally, catalyzes the transfer of the phosphoribosyl group of 5-phosphorylribose-1-pyrophosphate (PRPP) to anthranilate to yield N-(5'-phosphoribosyl)-anthranilate (PRA). This is Anthranilate phosphoribosyltransferase from Hahella chejuensis (strain KCTC 2396).